Here is a 434-residue protein sequence, read N- to C-terminus: Putative B3 domain-containing protein Os04g0347400 (434 aa).

3 DNA-binding regions (TF-B3) span residues 27–124, 150–246, and 326–432; these read SFHK…FDTT, KPQF…FGIN, and WIKK…DRVE.

It localises to the nucleus. This is Putative B3 domain-containing protein Os04g0347400 from Oryza sativa subsp. japonica (Rice).